The chain runs to 238 residues: Testis-specific gene A8 protein (238 aa).

Residues glycine 35 to threonine 238 are disordered. The segment covering lysine 39 to glycine 48 has biased composition (basic residues). Repeat copies occupy residues alanine 79 to serine 93, alanine 94 to serine 108, alanine 109 to serine 123, alanine 124 to serine 138, proline 153 to alanine 158, proline 171 to alanine 176, proline 180 to alanine 185, and proline 189 to alanine 194. Residues alanine 79 to alanine 148 are 4 X 15 AA tandem repeats of A-A-A-A-A-P-E-A-A-A-S-[PL]-E-S-S. 2 stretches are compositionally biased toward low complexity: residues alanine 79–alanine 200 and tryptophan 208–lysine 220. The interval proline 153–alanine 194 is 4 X 6 AA repeats of P-A-A-P-E-A.

In terms of tissue distribution, specifically expressed in testis (at protein level).

It localises to the cytoplasm. The protein resides in the nucleus. Its subcellular location is the nucleoplasm. The protein is Testis-specific gene A8 protein of Mus musculus (Mouse).